The following is a 516-amino-acid chain: Facilitated glucose transporter homolog (516 aa).

The segment at 1-37 is disordered; it reads MNAVVASQNKNDRSFSNMESESSSNVEKSEKENHHQS. At 1–47 the chain is on the cytoplasmic side; it reads MNAVVASQNKNDRSFSNMESESSSNVEKSEKENHHQSLPDENWTPFL. Residues 14–26 are compositionally biased toward low complexity; it reads SFSNMESESSSNV. The span at 27 to 37 shows a compositional bias: basic and acidic residues; that stretch reads EKSEKENHHQS. Residues 48–68 traverse the membrane as a helical segment; the sequence is FFCISSIALASFQDGFQIGCI. Residues 69–101 lie on the Extracellular side of the membrane; the sequence is NAPGPLIIDWIKKCHFELFGEVLSQYQADFIWS. A helical transmembrane segment spans residues 102–122; that stretch reads VAVSMFSVGGMFGSFCSGFLA. Over 123 to 138 the chain is Cytoplasmic; that stretch reads DKFGRKSTLLYNNILA. A helical membrane pass occupies residues 139–159; it reads LLAAVCLSTSKLFNFYPMIVF. Residues 160-161 are Extracellular-facing; the sequence is GR. Residues 162-182 traverse the membrane as a helical segment; it reads FLVGLNCGITSGLVPMFLTEL. The Cytoplasmic portion of the chain corresponds to 183-200; that stretch reads APANLRGKCGSFHQLNIS. Residues 201-221 form a helical membrane-spanning segment; it reads VAIVLSQALGLPQIFGTQVGW. Position 222 (Pro222) is a topological domain, extracellular. The helical transmembrane segment at 223 to 243 threads the bilayer; that stretch reads YIFACVAIPTFLQLATIPFCV. The Cytoplasmic portion of the chain corresponds to 244–306; it reads ESPKYLISKL…SLFKGDNQWP (63 aa). The chain crosses the membrane as a helical span at residues 307–327; it reads MIVSILMMFSQQFSGISAVTF. At 328-344 the chain is on the extracellular side; the sequence is YSTLIFKRNGLSGNEPM. Residues 345 to 365 form a helical membrane-spanning segment; that stretch reads YATVGFGCIKLIATFGCLFLI. At 366–376 the chain is on the cytoplasmic side; that stretch reads DHPKFGRKRLH. A helical membrane pass occupies residues 377-397; the sequence is IAGLSGMCISSILIVITLTLS. Topologically, residues 398 to 409 are extracellular; it reads NAGYHWASYMNV. Residues 410–430 form a helical membrane-spanning segment; that stretch reads LFILSFVVTFAFGPGPIPWFF. At 431-444 the chain is on the cytoplasmic side; the sequence is TSELFDSATRGRAA. Residues 445 to 465 traverse the membrane as a helical segment; it reads AVSATSNWVANWMVGLTFLPI. The Extracellular segment spans residues 466 to 471; sequence NNIIHQ. A helical transmembrane segment spans residues 472 to 492; it reads YAFLMFTFFTFTFAIFTWKFV. Residues 493 to 516 lie on the Cytoplasmic side of the membrane; that stretch reads PETKGKSPSAIRKELAFMRKRICS.

This sequence belongs to the major facilitator superfamily. Sugar transporter (TC 2.A.1.1) family. As to expression, expressed in seam cells from the early embryonic stage through the L2 stage (at protein level).

Its subcellular location is the cell membrane. In terms of biological role, appears to have no transport activity for glucose. This chain is Facilitated glucose transporter homolog, found in Caenorhabditis elegans.